Here is a 601-residue protein sequence, read N- to C-terminus: Glutathione-regulated potassium-efflux system protein KefB (601 aa).

The next 13 helical transmembrane spans lie at 5–25 (DLLLAGILFLFAAVVAVPIAA), 29–49 (IGAVLGYLLAGIAIGPWGLGF), 55–75 (EILHFSELGVVFLMFLIGLEL), 87–107 (IFGIGAAQVLLSAVVLAGLLM), 115–135 (AAVVGGIGLAMSSTAMALQLM), 152–172 (VLLFQDLAVIPALAMVPLLAG), 181–201 (LKIGMKVLAFAVMLVGGRYLL), 207–227 (FIAGSGVREVFTAAALLLVLG), 230–250 (LFMDLLGLSMALGTFIAGILL), 268–288 (GLLLGLFFISVGMALNLGVLY), 291–311 (ILWVVMSVVVLVSVKMAVLYG), 324–344 (LPFAGVLSQGGEFAFVLFSSA), and 356–376 (ALLLVTVTLSMMTTPLVMKGI). The RCK N-terminal domain maps to 400 to 519 (KPQVIIVGFG…AGVKQFSRET (120 aa)).

Belongs to the monovalent cation:proton antiporter 2 (CPA2) transporter (TC 2.A.37) family. KefB subfamily. Interacts with the regulatory subunit KefG.

The protein localises to the cell inner membrane. Functionally, pore-forming subunit of a potassium efflux system that confers protection against electrophiles. Catalyzes K(+)/H(+) antiport. This Cronobacter sakazakii (strain ATCC BAA-894) (Enterobacter sakazakii) protein is Glutathione-regulated potassium-efflux system protein KefB.